The following is a 238-amino-acid chain: Ubiquinone biosynthesis O-methyltransferase (238 aa).

Residues arginine 39, glycine 58, aspartate 79, and methionine 123 each coordinate S-adenosyl-L-methionine.

Belongs to the methyltransferase superfamily. UbiG/COQ3 family.

It catalyses the reaction a 3-demethylubiquinol + S-adenosyl-L-methionine = a ubiquinol + S-adenosyl-L-homocysteine + H(+). The catalysed reaction is a 3-(all-trans-polyprenyl)benzene-1,2-diol + S-adenosyl-L-methionine = a 2-methoxy-6-(all-trans-polyprenyl)phenol + S-adenosyl-L-homocysteine + H(+). Its pathway is cofactor biosynthesis; ubiquinone biosynthesis. In terms of biological role, O-methyltransferase that catalyzes the 2 O-methylation steps in the ubiquinone biosynthetic pathway. The polypeptide is Ubiquinone biosynthesis O-methyltransferase (Hahella chejuensis (strain KCTC 2396)).